The primary structure comprises 290 residues: Porphobilinogen deaminase (290 aa).

At cysteine 237 the chain carries S-(dipyrrolylmethanemethyl)cysteine.

Belongs to the HMBS family. As to quaternary structure, monomer. Dipyrromethane is required as a cofactor.

It catalyses the reaction 4 porphobilinogen + H2O = hydroxymethylbilane + 4 NH4(+). It functions in the pathway porphyrin-containing compound metabolism; protoporphyrin-IX biosynthesis; coproporphyrinogen-III from 5-aminolevulinate: step 2/4. Functionally, tetrapolymerization of the monopyrrole PBG into the hydroxymethylbilane pre-uroporphyrinogen in several discrete steps. The sequence is that of Porphobilinogen deaminase from Clostridium kluyveri (strain NBRC 12016).